A 347-amino-acid polypeptide reads, in one-letter code: Protein phosphatase 1 regulatory subunit 3G (347 aa).

Positions 1 to 77 are disordered; it reads MDPSGEQLHR…ELQEYRRSRA (77 aa). Over residues 13–22 the composition is skewed to polar residues; the sequence is ASSSTSSGDP. Serine 81 carries the phosphoserine modification. Residues 200 to 339 form the CBM21 domain; that stretch reads EERLRRQRVC…NNEGANYTLR (140 aa). The disordered stretch occupies residues 258–286; sequence DPESVEPLPPLQSGDSGSKAEDSEEGPGT.

Its function is as follows. Glycogen-targeting subunit for protein phosphatase 1 (PP1). Involved in the regulation of hepatic glycogenesis in a manner coupled to the fasting-feeding cycle and distinct from other glycogen-targeting subunits. This is Protein phosphatase 1 regulatory subunit 3G (Ppp1r3g) from Mus musculus (Mouse).